Reading from the N-terminus, the 375-residue chain is E3 ubiquitin-protein ligase FANCL (375 aa).

A2 is modified (N-acetylalanine). The tract at residues 104-294 is UBC-RWD region (URD); the sequence is LPPPPQFYSS…KDVLEIDFPA (191 aa). Residues C307, C310, C324, C329, H334, C337, C359, and C362 each coordinate Zn(2+). The segment at 307–363 adopts an RING-type; degenerate zinc-finger fold; that stretch reads CGICYAYQLDGTIPDQVCDNSQCGQPFHQICLYEWLRGLLTSRQSFNIIFGECPYCS.

In terms of assembly, interacts with GGN. Belongs to the multisubunit FA complex composed of FANCA, FANCB, FANCC, FANCE, FANCF, FANCG, FANCL/PHF9 and FANCM. The complex is not found in FA patients. In complex with FANCF, FANCA and FANCG, but not with FANCC, nor FANCE, interacts with HES1; this interaction may be essential for the stability and nuclear localization of FA core complex proteins. Interacts with FANCI. Directly interacts (via the RING-type zinc finger) with UBE2T and UBE2W. The RING-type zinc finger domain is monoubiquitinated in the presence of UBE2T and UBE2W.

The protein localises to the cytoplasm. Its subcellular location is the nucleus. It carries out the reaction S-ubiquitinyl-[E2 ubiquitin-conjugating enzyme]-L-cysteine + [acceptor protein]-L-lysine = [E2 ubiquitin-conjugating enzyme]-L-cysteine + N(6)-ubiquitinyl-[acceptor protein]-L-lysine.. Its pathway is protein modification; protein ubiquitination. Ubiquitin ligase protein that mediates monoubiquitination of FANCD2 in the presence of UBE2T, a key step in the DNA damage pathway. Also mediates monoubiquitination of FANCI. May stimulate the ubiquitin release from UBE2W. May be required for proper primordial germ cell proliferation in the embryonic stage, whereas it is probably not needed for spermatogonial proliferation after birth. In Homo sapiens (Human), this protein is E3 ubiquitin-protein ligase FANCL (FANCL).